Here is a 300-residue protein sequence, read N- to C-terminus: tRNA dimethylallyltransferase (300 aa).

9–16 contacts ATP; that stretch reads GPTASGKS. 11 to 16 serves as a coordination point for substrate; sequence TASGKS. Residues 34 to 37 are interaction with substrate tRNA; it reads DSKQ.

This sequence belongs to the IPP transferase family. In terms of assembly, monomer. Mg(2+) serves as cofactor.

It catalyses the reaction adenosine(37) in tRNA + dimethylallyl diphosphate = N(6)-dimethylallyladenosine(37) in tRNA + diphosphate. In terms of biological role, catalyzes the transfer of a dimethylallyl group onto the adenine at position 37 in tRNAs that read codons beginning with uridine, leading to the formation of N6-(dimethylallyl)adenosine (i(6)A). This chain is tRNA dimethylallyltransferase, found in Ehrlichia canis (strain Jake).